We begin with the raw amino-acid sequence, 141 residues long: Nucleoside diphosphate kinase (141 aa).

ATP contacts are provided by Lys9, Phe57, Arg85, Thr91, Arg102, and Asn112. Catalysis depends on His115, which acts as the Pros-phosphohistidine intermediate.

This sequence belongs to the NDK family. Homotetramer. Mg(2+) serves as cofactor.

The protein localises to the cytoplasm. It catalyses the reaction a 2'-deoxyribonucleoside 5'-diphosphate + ATP = a 2'-deoxyribonucleoside 5'-triphosphate + ADP. The catalysed reaction is a ribonucleoside 5'-diphosphate + ATP = a ribonucleoside 5'-triphosphate + ADP. Functionally, major role in the synthesis of nucleoside triphosphates other than ATP. The ATP gamma phosphate is transferred to the NDP beta phosphate via a ping-pong mechanism, using a phosphorylated active-site intermediate. In Chlamydia felis (strain Fe/C-56) (Chlamydophila felis), this protein is Nucleoside diphosphate kinase.